Consider the following 170-residue polypeptide: SKP1-like protein 16 (170 aa).

Residues 109–167 (ILAVNYLNVQDLLGLTCQTVADHMKDMSPEEVRELFNIENDYTPEEEDAIRKENAWAFE) form an interaction with the F-box domain of F-box proteins region.

Belongs to the SKP1 family. As to quaternary structure, part of a SCF (SKP1-cullin-F-box) protein ligase complex. Interacts with CPR1/CPR30, At3g61590 and At4g11590. As to expression, mainly detected in the siliques.

Its subcellular location is the nucleus. It participates in protein modification; protein ubiquitination. Involved in ubiquitination and subsequent proteasomal degradation of target proteins. Together with CUL1, RBX1 and a F-box protein, it forms a SCF E3 ubiquitin ligase complex. The functional specificity of this complex depends on the type of F-box protein. In the SCF complex, it serves as an adapter that links the F-box protein to CUL1. The sequence is that of SKP1-like protein 16 (ASK16) from Arabidopsis thaliana (Mouse-ear cress).